Here is a 588-residue protein sequence, read N- to C-terminus: Adenine deaminase (588 aa).

Belongs to the metallo-dependent hydrolases superfamily. Adenine deaminase family. As to quaternary structure, homodimer. Mn(2+) is required as a cofactor.

It carries out the reaction adenine + H2O + H(+) = hypoxanthine + NH4(+). This is Adenine deaminase from Escherichia coli (strain SMS-3-5 / SECEC).